Consider the following 165-residue polypeptide: Type VI lipase immunity protein Tli3 (165 aa).

A signal peptide spans 1–21 (MKCKTLLIACLFGLGSAQALA).

Interacts with the Tle3 toxin.

The protein resides in the periplasm. In terms of biological role, immunity protein that neutralizes the toxicity of the P.aeruginosa antibacterial toxin Tle3 in the periplasm to protect the cell from fratricide intoxication. This Pseudomonas aeruginosa (strain ATCC 15692 / DSM 22644 / CIP 104116 / JCM 14847 / LMG 12228 / 1C / PRS 101 / PAO1) protein is Type VI lipase immunity protein Tli3.